Consider the following 163-residue polypeptide: Large ribosomal subunit protein bL17 (163 aa).

A disordered region spans residues 127 to 163 (KEVKKAKSRRGGKAKKAEGTAPEAPAAESESTTEASE). The span at 128 to 140 (EVKKAKSRRGGKA) shows a compositional bias: basic residues. The span at 145–163 (GTAPEAPAAESESTTEASE) shows a compositional bias: low complexity.

This sequence belongs to the bacterial ribosomal protein bL17 family. As to quaternary structure, part of the 50S ribosomal subunit. Contacts protein L32.

The chain is Large ribosomal subunit protein bL17 from Flavobacterium johnsoniae (strain ATCC 17061 / DSM 2064 / JCM 8514 / BCRC 14874 / CCUG 350202 / NBRC 14942 / NCIMB 11054 / UW101) (Cytophaga johnsonae).